The sequence spans 1040 residues: ATPase family AAA domain-containing protein 2 (1040 aa).

Positions 1 to 11 (MSLLKMRRHAI) are enriched in basic residues. Residues 1–30 (MSLLKMRRHAIHSSDSTSSSSSEDDCFERR) are disordered. Ser-65 carries the post-translational modification Phosphoserine. Position 122-129 (122-129 (GPPGTGKT)) interacts with ATP. Residues Ser-401 and Ser-406 each carry the phosphoserine modification. 2 coiled-coil regions span residues 619–643 (LTAEEVKRLEEQEEDTFRELRIFLR) and 735–761 (YAIIKEELDEDFEQLCEEIQESRKKRG). In terms of domain architecture, Bromo spans 629 to 741 (EQEEDTFREL…DTAYAIIKEE (113 aa)). A disordered region spans residues 772–799 (YHVMPKQNSPPVGDKKPDQEQNEKLKVP). Glycyl lysine isopeptide (Lys-Gly) (interchain with G-Cter in SUMO2) cross-links involve residues Lys-777 and Lys-797. The segment covering 784–797 (GDKKPDQEQNEKLK) has biased composition (basic and acidic residues). 2 positions are modified to phosphothreonine: Thr-801 and Thr-825. Positions 811–833 (LKRKFHKKSKWHVGTKIKRRKIS) are enriched in basic residues. The disordered stretch occupies residues 811–935 (LKRKFHKKSK…SQVTDIPEDS (125 aa)). Positions 835-848 (AKDNSLNAMNSSSR) are enriched in polar residues. 3 positions are modified to phosphoserine: Ser-849, Ser-883, and Ser-891. Composition is skewed to basic and acidic residues over residues 849–863 (SDTEDSQHTHAEHTE) and 874–885 (ESDKQNRLESNI). Residues 901–919 (EEPKETTEGTELRKDRIVC) show a composition bias toward basic and acidic residues. Residue Ser-951 is modified to Phosphoserine. At Thr-972 the chain carries Phosphothreonine.

The protein belongs to the AAA ATPase family. Interacts with ESR1 and NCOA3 and these interactions are enhanced by estradiol. Interacts with acetylated lysine residues on histone H1.4, H2A, H2B and H3 (in vitro).

The protein localises to the nucleus. The enzyme catalyses ATP + H2O = ADP + phosphate + H(+). Its function is as follows. May be a transcriptional coactivator of the nuclear receptor ESR1 required to induce the expression of a subset of estradiol target genes, such as CCND1, MYC and E2F1. May play a role in the recruitment or occupancy of CREBBP at some ESR1 target gene promoters. May be required for histone hyperacetylation. This chain is ATPase family AAA domain-containing protein 2 (Atad2), found in Mus musculus (Mouse).